The sequence spans 239 residues: DNA repair protein RecO (239 aa).

Belongs to the RecO family.

In terms of biological role, involved in DNA repair and RecF pathway recombination. The sequence is that of DNA repair protein RecO from Christiangramia forsetii (strain DSM 17595 / CGMCC 1.15422 / KT0803) (Gramella forsetii).